A 149-amino-acid chain; its full sequence is Large ribosomal subunit protein bL9 (149 aa).

The protein belongs to the bacterial ribosomal protein bL9 family.

Binds to the 23S rRNA. The sequence is that of Large ribosomal subunit protein bL9 from Salmonella agona (strain SL483).